Consider the following 558-residue polypeptide: Arginine--tRNA ligase (558 aa).

Residues 119-129 (ANPNGPLHVGH) carry the 'HIGH' region motif.

The protein belongs to the class-I aminoacyl-tRNA synthetase family.

The protein localises to the cytoplasm. The enzyme catalyses tRNA(Arg) + L-arginine + ATP = L-arginyl-tRNA(Arg) + AMP + diphosphate. This is Arginine--tRNA ligase from Methanoregula boonei (strain DSM 21154 / JCM 14090 / 6A8).